A 250-amino-acid polypeptide reads, in one-letter code: Triosephosphate isomerase (250 aa).

9–11 contributes to the substrate binding site; that stretch reads NWK. Histidine 96 functions as the Electrophile in the catalytic mechanism. Glutamate 166 (proton acceptor) is an active-site residue. Substrate-binding positions include glycine 172, serine 212, and 233 to 234; that span reads GG.

Belongs to the triosephosphate isomerase family. As to quaternary structure, homodimer.

The protein resides in the cytoplasm. The enzyme catalyses D-glyceraldehyde 3-phosphate = dihydroxyacetone phosphate. It functions in the pathway carbohydrate biosynthesis; gluconeogenesis. It participates in carbohydrate degradation; glycolysis; D-glyceraldehyde 3-phosphate from glycerone phosphate: step 1/1. Its function is as follows. Involved in the gluconeogenesis. Catalyzes stereospecifically the conversion of dihydroxyacetone phosphate (DHAP) to D-glyceraldehyde-3-phosphate (G3P). This is Triosephosphate isomerase from Chlorobium luteolum (strain DSM 273 / BCRC 81028 / 2530) (Pelodictyon luteolum).